A 496-amino-acid chain; its full sequence is Catalase-A (496 aa).

Active-site residues include His54 and Asn128. Tyr338 contacts heme. A Microbody targeting signal motif is present at residues 494-496; that stretch reads SNL.

The protein belongs to the catalase family. Heme is required as a cofactor.

The protein localises to the peroxisome matrix. It carries out the reaction 2 H2O2 = O2 + 2 H2O. In terms of biological role, catalyzes the degradation of hydrogen peroxide (H(2)O(2)) generated by peroxisomal oxidases to water and oxygen, thereby protecting cells from the toxic effects of hydrogen peroxide. The polypeptide is Catalase-A (catA) (Dictyostelium discoideum (Social amoeba)).